The primary structure comprises 583 residues: Arginine--tRNA ligase (583 aa).

The short motif at 131 to 141 (ANPTGPMHVGH) is the 'HIGH' region element.

This sequence belongs to the class-I aminoacyl-tRNA synthetase family. In terms of assembly, monomer.

It is found in the cytoplasm. It carries out the reaction tRNA(Arg) + L-arginine + ATP = L-arginyl-tRNA(Arg) + AMP + diphosphate. The polypeptide is Arginine--tRNA ligase (Parvibaculum lavamentivorans (strain DS-1 / DSM 13023 / NCIMB 13966)).